The primary structure comprises 211 residues: MHFRYNYRMQRSKTPNTKNSDTGSIPGNIILIGMMGSGKTTVGKLLANLVGKTFIDIDHEIQRRTGVGIPVIFEIEGEAGFRKRESEVLRDIVRQQNIVLATGGGAILHPDNRALLRQHGTVVYLCAPVTELRRRTYLDKNRPLLQTGNVHAKLIELFTQRDPLYRETAHIIMDSGRQSARAFVQKLIQKLRQSNQEFTAAGSPPCVKPSE.

Residues 1-22 (MHFRYNYRMQRSKTPNTKNSDT) are disordered. Residues 12–22 (SKTPNTKNSDT) are compositionally biased toward polar residues. 36–41 (GSGKTT) provides a ligand contact to ATP. Threonine 40 is a binding site for Mg(2+). Aspartate 58, arginine 82, and glycine 104 together coordinate substrate. ATP is bound at residue arginine 142. Arginine 161 serves as a coordination point for substrate. Position 178 (glutamine 178) interacts with ATP.

The protein belongs to the shikimate kinase family. Monomer. It depends on Mg(2+) as a cofactor.

It is found in the cytoplasm. The enzyme catalyses shikimate + ATP = 3-phosphoshikimate + ADP + H(+). It functions in the pathway metabolic intermediate biosynthesis; chorismate biosynthesis; chorismate from D-erythrose 4-phosphate and phosphoenolpyruvate: step 5/7. Functionally, catalyzes the specific phosphorylation of the 3-hydroxyl group of shikimic acid using ATP as a cosubstrate. The chain is Shikimate kinase from Nitrosomonas europaea (strain ATCC 19718 / CIP 103999 / KCTC 2705 / NBRC 14298).